The following is a 463-amino-acid chain: Glutamyl-tRNA(Gln) amidotransferase subunit A, mitochondrial (463 aa).

Active-site charge relay system residues include lysine 47 and serine 124. Catalysis depends on serine 148, which acts as the Acyl-ester intermediate.

Belongs to the amidase family. GatA subfamily. As to quaternary structure, subunit of the heterotrimeric GatFAB amidotransferase (AdT) complex, composed of A, B and F subunits.

Its subcellular location is the mitochondrion. It catalyses the reaction L-glutamyl-tRNA(Gln) + L-glutamine + ATP + H2O = L-glutaminyl-tRNA(Gln) + L-glutamate + ADP + phosphate + H(+). Allows the formation of correctly charged Gln-tRNA(Gln) through the transamidation of misacylated Glu-tRNA(Gln) in the mitochondria. The reaction takes place in the presence of glutamine and ATP through an activated gamma-phospho-Glu-tRNA(Gln). This Eremothecium gossypii (strain ATCC 10895 / CBS 109.51 / FGSC 9923 / NRRL Y-1056) (Yeast) protein is Glutamyl-tRNA(Gln) amidotransferase subunit A, mitochondrial.